Here is a 566-residue protein sequence, read N- to C-terminus: MWLLPLVLTSLASSATWAGQPASPPVVDTAQGRVLGKYVSLEGLAQPVAVFLGVPFAKPPLGSLRFAPPQPAEPWSFVKNTTSYPPMCCQDPVVEQMTSDLFTNGKERLTLEFSEDCLYLNIYTPADLTKRGRLPVMVWIHGGGLVLGGAPMYDGVVLAAHENVVVVAIQYRLGIWGFFSTGDEHSRGNWGHLDQVAALHWVQENIANFGGDPGSVTIFGESAGGESVSVLVLSPLAKNLFHRAISESGVALTVALVRKDMKAAAKQIAVLAGCKTTTSAVFVHCLRQKSEDELLDLTLKMKFLTLDFHGDQRESHPFLPTVVDGVLLPKMPEEILAEKDFNTVPYIVGINKQEFGWLLPTMMGFPLSEGKLDQKTATSLLWKSYPIANIPEELTPVATDKYLGGTDDPVKKKDLFLDLMGDVVFGVPSVTVARQHRDAGAPTYMYEFQYRPSFSSDKKPKTVIGDHGDEIFSVFGFPLLKGDAPEEEVSLSKTVMKFWANFARSGNPNGEGLPHWPMYDQEEGYLQIGVNTQAAKRLKGEEVAFWNDLLSKEAAKKPPKIKHAEL.

Residues 1–18 (MWLLPLVLTSLASSATWA) form the signal peptide. N-linked (GlcNAc...) asparagine glycosylation is present at N80. Cysteines 88 and 117 form a disulfide. S222 serves as the catalytic Acyl-ester intermediate. A disulfide bond links C274 and C285. The Charge relay system role is filled by E354. A Phosphoserine modification is found at S379. Catalysis depends on H467, which acts as the Charge relay system. The short motif at 563–566 (HAEL) is the Prevents secretion from ER element.

It belongs to the type-B carboxylesterase/lipase family.

The protein resides in the endoplasmic reticulum lumen. The enzyme catalyses a carboxylic ester + H2O = an alcohol + a carboxylate + H(+). Its activity is regulated as follows. Activated by CHAPS at concentrations of up to 130 mM, higher concentrations reduce activity. In the presence of CHAPS, activity is stimulated by non-ionic detergents. Inhibited by the esterase inhibitors diisopropylfluorophosphate and phenylmethylsulfonyl fluoride. Involved in the detoxification of xenobiotics and in the activation of ester and amide prodrugs. Active towards triacylglycerides containing short-chain fatty acids from C2 to C6, and 1(3)-monoacylglycerols containing fatty acids from C2 to C12. Inactive on long-chain triacylglycerols and diacylglycerol. Hydrolyzes aromatic and alkyl esters and vitamin A acetate. The hydrolysis rate depends upon the amino acid promoiety and the esterification site of the prodrug. Aromatic promoieties are favored, highest rates are observed with phenylalanyl progdrugs, hydrolysis of valyl and isoleucyl prodrugs is less efficient. With floxuridine prodrugs, activity is higher on 5' monoesters than on 3' monoesters. With gemcitabine prodrugs, activity is higher on 3' monoesters than on 5' monoesters. This is Liver carboxylesterase from Sus scrofa (Pig).